The following is a 737-amino-acid chain: Phosphoribosylformylglycinamidine synthase subunit PurL (737 aa).

H50 is an active-site residue. ATP contacts are provided by Y53 and K92. Residue E94 coordinates Mg(2+). Substrate is bound by residues 95–98 and R117; that span reads SHNH. The Proton acceptor role is filled by H96. D118 contacts Mg(2+). Q241 is a binding site for substrate. A Mg(2+)-binding site is contributed by D269. 313–315 is a substrate binding site; sequence ESQ. Residues D495 and G532 each contribute to the ATP site. N533 serves as a coordination point for Mg(2+). S535 contributes to the substrate binding site.

The protein belongs to the FGAMS family. As to quaternary structure, monomer. Part of the FGAM synthase complex composed of 1 PurL, 1 PurQ and 2 PurS subunits.

The protein localises to the cytoplasm. The catalysed reaction is N(2)-formyl-N(1)-(5-phospho-beta-D-ribosyl)glycinamide + L-glutamine + ATP + H2O = 2-formamido-N(1)-(5-O-phospho-beta-D-ribosyl)acetamidine + L-glutamate + ADP + phosphate + H(+). Its pathway is purine metabolism; IMP biosynthesis via de novo pathway; 5-amino-1-(5-phospho-D-ribosyl)imidazole from N(2)-formyl-N(1)-(5-phospho-D-ribosyl)glycinamide: step 1/2. In terms of biological role, part of the phosphoribosylformylglycinamidine synthase complex involved in the purines biosynthetic pathway. Catalyzes the ATP-dependent conversion of formylglycinamide ribonucleotide (FGAR) and glutamine to yield formylglycinamidine ribonucleotide (FGAM) and glutamate. The FGAM synthase complex is composed of three subunits. PurQ produces an ammonia molecule by converting glutamine to glutamate. PurL transfers the ammonia molecule to FGAR to form FGAM in an ATP-dependent manner. PurS interacts with PurQ and PurL and is thought to assist in the transfer of the ammonia molecule from PurQ to PurL. This chain is Phosphoribosylformylglycinamidine synthase subunit PurL, found in Bartonella bacilliformis (strain ATCC 35685 / KC583 / Herrer 020/F12,63).